Reading from the N-terminus, the 466-residue chain is 3-isopropylmalate dehydratase large subunit (466 aa).

[4Fe-4S] cluster contacts are provided by Cys347, Cys407, and Cys410.

This sequence belongs to the aconitase/IPM isomerase family. LeuC type 1 subfamily. Heterodimer of LeuC and LeuD. The cofactor is [4Fe-4S] cluster.

It catalyses the reaction (2R,3S)-3-isopropylmalate = (2S)-2-isopropylmalate. Its pathway is amino-acid biosynthesis; L-leucine biosynthesis; L-leucine from 3-methyl-2-oxobutanoate: step 2/4. Functionally, catalyzes the isomerization between 2-isopropylmalate and 3-isopropylmalate, via the formation of 2-isopropylmaleate. This chain is 3-isopropylmalate dehydratase large subunit, found in Enterobacter sp. (strain 638).